Reading from the N-terminus, the 288-residue chain is Protein PXR1 (288 aa).

The G-patch domain occupies 25–72 (QSRFGHKHLMRFGWQPGQGLGTQPVQSMKTHIKVSIKDDNLGLGAKLK). The tract at residues 147 to 258 (SYSQMEKDSS…TSIPESVSTR (112 aa)) is disordered. Over residues 157-166 (SDEESDDDED) the composition is skewed to acidic residues. 2 stretches are compositionally biased toward basic residues: residues 169–185 (KKHK…KKRK) and 195–214 (KKKK…KDKK). The span at 238–256 (RTASIESSTSATSIPESVS) shows a compositional bias: low complexity.

The protein belongs to the PINX1 family.

It is found in the nucleus. It localises to the nucleolus. Its function is as follows. Involved in rRNA-processing at A0, A1 and A2 sites and negatively regulates telomerase. This is Protein PXR1 (PXR1) from Candida glabrata (strain ATCC 2001 / BCRC 20586 / JCM 3761 / NBRC 0622 / NRRL Y-65 / CBS 138) (Yeast).